Consider the following 340-residue polypeptide: Ketol-acid reductoisomerase (NADP(+)) (340 aa).

One can recognise a KARI N-terminal Rossmann domain in the interval 1–183 (MAITVYYDKD…GGGRTGIIET (183 aa)). Residues 26-29 (FGSQ), Arg49, Ser52, Ser54, and 84-87 (DEIQ) contribute to the NADP(+) site. His109 is a catalytic residue. Gly135 is an NADP(+) binding site. The KARI C-terminal knotted domain maps to 184-329 (TFKAETETDL…RNLRAMMPWI (146 aa)). Residues Asp192, Glu196, Glu228, and Glu232 each coordinate Mg(2+). Ser253 serves as a coordination point for substrate.

It belongs to the ketol-acid reductoisomerase family. Mg(2+) serves as cofactor.

The enzyme catalyses (2R)-2,3-dihydroxy-3-methylbutanoate + NADP(+) = (2S)-2-acetolactate + NADPH + H(+). It carries out the reaction (2R,3R)-2,3-dihydroxy-3-methylpentanoate + NADP(+) = (S)-2-ethyl-2-hydroxy-3-oxobutanoate + NADPH + H(+). It participates in amino-acid biosynthesis; L-isoleucine biosynthesis; L-isoleucine from 2-oxobutanoate: step 2/4. The protein operates within amino-acid biosynthesis; L-valine biosynthesis; L-valine from pyruvate: step 2/4. In terms of biological role, involved in the biosynthesis of branched-chain amino acids (BCAA). Catalyzes an alkyl-migration followed by a ketol-acid reduction of (S)-2-acetolactate (S2AL) to yield (R)-2,3-dihydroxy-isovalerate. In the isomerase reaction, S2AL is rearranged via a Mg-dependent methyl migration to produce 3-hydroxy-3-methyl-2-ketobutyrate (HMKB). In the reductase reaction, this 2-ketoacid undergoes a metal-dependent reduction by NADPH to yield (R)-2,3-dihydroxy-isovalerate. This chain is Ketol-acid reductoisomerase (NADP(+)), found in Campylobacter jejuni subsp. doylei (strain ATCC BAA-1458 / RM4099 / 269.97).